A 188-amino-acid polypeptide reads, in one-letter code: UPF0398 protein SE_1135 (188 aa).

The protein belongs to the UPF0398 family.

The sequence is that of UPF0398 protein SE_1135 from Staphylococcus epidermidis (strain ATCC 12228 / FDA PCI 1200).